A 213-amino-acid polypeptide reads, in one-letter code: Putative 3-methyladenine DNA glycosylase (213 aa).

This sequence belongs to the DNA glycosylase MPG family.

The sequence is that of Putative 3-methyladenine DNA glycosylase from Leifsonia xyli subsp. xyli (strain CTCB07).